A 131-amino-acid polypeptide reads, in one-letter code: Profilin-7 (131 aa).

Cysteines 13 and 115 form a disulfide. An Involved in PIP2 interaction motif is present at residues 81 to 97 (AVIRGKKGSGGITVKKT). Threonine 111 bears the Phosphothreonine mark.

Belongs to the profilin family. In terms of assembly, occurs in many kinds of cells as a complex with monomeric actin in a 1:1 ratio. Post-translationally, phosphorylated by MAP kinases.

The protein resides in the cytoplasm. It is found in the cytoskeleton. Binds to actin and affects the structure of the cytoskeleton. At high concentrations, profilin prevents the polymerization of actin, whereas it enhances it at low concentrations. This is Profilin-7 from Zea mays (Maize).